The primary structure comprises 179 residues: MAKLHDYYKETVVKELVEKFEYKSIMQVPRIEKITLNMGVGEAINDKKLLENAAADMTAIAGQKPLITKARKSVAGFKIREGYPIGCKVTLRGERMWDFFERLISIAVPRIRDFRGLNPNSFDGRGNYSMGVREQIIFPEIDYDKVDRVRGLDITITTSAASDEESKALLSAFNFPFRK.

The protein belongs to the universal ribosomal protein uL5 family. Part of the 50S ribosomal subunit; part of the 5S rRNA/L5/L18/L25 subcomplex. Contacts the 5S rRNA and the P site tRNA. Forms a bridge to the 30S subunit in the 70S ribosome.

This is one of the proteins that bind and probably mediate the attachment of the 5S RNA into the large ribosomal subunit, where it forms part of the central protuberance. In the 70S ribosome it contacts protein S13 of the 30S subunit (bridge B1b), connecting the 2 subunits; this bridge is implicated in subunit movement. Contacts the P site tRNA; the 5S rRNA and some of its associated proteins might help stabilize positioning of ribosome-bound tRNAs. The polypeptide is Large ribosomal subunit protein uL5 (Photobacterium profundum (strain SS9)).